The following is a 314-amino-acid chain: Zinc transporter ZIP3 (314 aa).

Residues 1–3 lie on the Extracellular side of the membrane; that stretch reads MNL. A helical transmembrane segment spans residues 4–24; it reads IFAKVLCLLAILVLMMLGSLI. At 25–41 the chain is on the cytoplasmic side; sequence PVKISEADFDKSSRSRK. Residues 42 to 62 traverse the membrane as a helical segment; that stretch reads ILSLSNSFAGGVFLATCFNAL. Topologically, residues 63–84 are extracellular; the sequence is LPAVREKFFDLLKIGNISTDYP. Residues 85–105 form a helical membrane-spanning segment; sequence LAETIMMVGFFLTVFVEQTVM. The Cytoplasmic portion of the chain corresponds to 106-169; it reads TFRKEKPSFI…KELSSSSPIR (64 aa). The chain crosses the membrane as a helical span at residues 170-190; that stretch reads LFSLVFALSAHSVFEGLALGL. Over 191–196 the chain is Extracellular; it reads QEDGNK. The chain crosses the membrane as a helical span at residues 197 to 217; the sequence is LLSLFIGVVIHETLVAMALGV. The Cytoplasmic segment spans residues 218–229; that stretch reads SMAKVNTHLKDA. A helical membrane pass occupies residues 230-250; it reads IKMAVLVSTMIPIGIVVGMAI. Topologically, residues 251–262 are extracellular; the sequence is QSAQNMASSIAS. Residues 263–283 traverse the membrane as a helical segment; sequence ALLQGIAGGTFIFVTFFEILV. Topologically, residues 284–292 are cytoplasmic; that stretch reads KELEEKNDR. Residues 293 to 313 form a helical membrane-spanning segment; that stretch reads LLKVLFLVLGYTVLAVLVLFK. A topological domain (extracellular) is located at residue W314.

It belongs to the ZIP transporter (TC 2.A.5) family.

The protein resides in the cell membrane. It is found in the apical cell membrane. The enzyme catalyses Zn(2+)(in) = Zn(2+)(out). Transporter for the divalent cation Zn(2+). Mediates the influx of Zn(2+) into cells from extracellular space. The polypeptide is Zinc transporter ZIP3 (slc39a3) (Xenopus tropicalis (Western clawed frog)).